A 307-amino-acid polypeptide reads, in one-letter code: Acetaldehyde dehydrogenase 1 (307 aa).

Catalysis depends on cysteine 132, which acts as the Acyl-thioester intermediate. NAD(+) is bound by residues 163 to 171 and asparagine 274; that span reads SVGPGTRKN.

The protein belongs to the acetaldehyde dehydrogenase family.

It catalyses the reaction acetaldehyde + NAD(+) + CoA = acetyl-CoA + NADH + H(+). The protein is Acetaldehyde dehydrogenase 1 (tesF) of Comamonas testosteroni (Pseudomonas testosteroni).